Here is a 73-residue protein sequence, read N- to C-terminus: Carboxysome shell vertex protein CsoS4B (73 aa).

The BMV domain maps to 1 to 68 (MVCTQRVAGL…TDLTIGGIID (68 aa)).

The protein belongs to the CcmL/EutN family. CsoS4 subfamily. In terms of assembly, homopentamer.

The protein resides in the carboxysome. Probably forms vertices in the carboxysome, a polyhedral inclusion where RuBisCO (ribulose bisphosphate carboxylase, cbbL-cbbS) is sequestered. Has been modeled to induce curvature upon insertion into an otherwise flat hexagonal layer of major carboxysome subunits. Has not been identified in purified carboxysomes; it is expected to be present in very low amounts. The protein is Carboxysome shell vertex protein CsoS4B of Prochlorococcus marinus subsp. pastoris (strain CCMP1986 / NIES-2087 / MED4).